Reading from the N-terminus, the 142-residue chain is MKTFTAKPESVQRDWYVVDATGKTLGRLATELARRLRGKHKAEYTPHVDTGDYIIVLNAEKVAVTGNKRSDKIYYHHTGHIGGIKQATFEEMIARRPERVIEIAVKGMLPKGPLGRAMYRKLKVYAGNEHNHAAQQPQVLDI.

The protein belongs to the universal ribosomal protein uL13 family. In terms of assembly, part of the 50S ribosomal subunit.

Its function is as follows. This protein is one of the early assembly proteins of the 50S ribosomal subunit, although it is not seen to bind rRNA by itself. It is important during the early stages of 50S assembly. The protein is Large ribosomal subunit protein uL13 of Erwinia tasmaniensis (strain DSM 17950 / CFBP 7177 / CIP 109463 / NCPPB 4357 / Et1/99).